Consider the following 374-residue polypeptide: Quinolinate synthase (374 aa).

Residues His-53 and Ser-70 each contribute to the iminosuccinate site. Cys-116 is a binding site for [4Fe-4S] cluster. Residues 148-150 (YMN) and Ser-169 each bind iminosuccinate. Cys-236 provides a ligand contact to [4Fe-4S] cluster. Iminosuccinate-binding positions include 262–264 (HPE) and Thr-279. Residue Cys-327 coordinates [4Fe-4S] cluster.

This sequence belongs to the quinolinate synthase family. Type 3 subfamily. [4Fe-4S] cluster is required as a cofactor.

The protein resides in the cytoplasm. It catalyses the reaction iminosuccinate + dihydroxyacetone phosphate = quinolinate + phosphate + 2 H2O + H(+). It participates in cofactor biosynthesis; NAD(+) biosynthesis; quinolinate from iminoaspartate: step 1/1. Its function is as follows. Catalyzes the condensation of iminoaspartate with dihydroxyacetone phosphate to form quinolinate. The polypeptide is Quinolinate synthase (Haloarcula marismortui (strain ATCC 43049 / DSM 3752 / JCM 8966 / VKM B-1809) (Halobacterium marismortui)).